A 477-amino-acid polypeptide reads, in one-letter code: Shikimate biosynthesis protein AroDE (477 aa).

The interval Met-1–Ser-209 is 3-dehydroquinate dehydratase. 3-dehydroquinate-binding positions include Ser-21, Glu-29–Arg-31, and Thr-56–Arg-58. Residue His-111 is the Proton donor/acceptor; for 3-dehydroquinate dehydratase activity of the active site. The active-site Schiff-base intermediate with substrate; for 3-dehydroquinate dehydratase activity is Lys-134. Positions 172 and 197 each coordinate 3-dehydroquinate. The interval Lys-210 to Val-477 is shikimate 5-dehydrogenase. Shikimate is bound at residue Ser-228 to Ser-230. Lys-279 (proton acceptor; for shikimate dehydrogenase activity) is an active-site residue. Shikimate-binding residues include Asn-300 and Asp-315. NADP(+) contacts are provided by residues Gly-339 to Ala-343, Asn-362 to Thr-364, and Gly-438. Gln-445 lines the shikimate pocket.

The protein in the N-terminal section; belongs to the type-I 3-dehydroquinase family. In the C-terminal section; belongs to the shikimate dehydrogenase family.

It catalyses the reaction 3-dehydroquinate = 3-dehydroshikimate + H2O. The catalysed reaction is shikimate + NADP(+) = 3-dehydroshikimate + NADPH + H(+). It functions in the pathway metabolic intermediate biosynthesis; chorismate biosynthesis; chorismate from D-erythrose 4-phosphate and phosphoenolpyruvate: step 3/7. It participates in metabolic intermediate biosynthesis; chorismate biosynthesis; chorismate from D-erythrose 4-phosphate and phosphoenolpyruvate: step 4/7. Its function is as follows. Bifunctional enzyme that catalyzes two sequential steps of the aromatic amino acids biosynthetic pathway. In the first reaction, the AroD domain catalyzes the cis-dehydration of 3-dehydroquinate (DHQ) and introduces the first double bond of the aromatic ring to yield 3-dehydroshikimate; in the second reaction, the AroE domain catalyzes the reversible NADPH linked reduction of 3-dehydroshikimate (DHSA) to yield shikimate (SA). The protein is Shikimate biosynthesis protein AroDE of Chlamydia pneumoniae (Chlamydophila pneumoniae).